Consider the following 83-residue polypeptide: ATP synthase subunit c (83 aa).

A run of 2 helical transmembrane segments spans residues 10–30 and 52–72; these read IAVA…FGLL and MFIV…IALY.

Belongs to the ATPase C chain family. F-type ATPases have 2 components, F(1) - the catalytic core - and F(0) - the membrane proton channel. F(1) has five subunits: alpha(3), beta(3), gamma(1), delta(1), epsilon(1). F(0) has three main subunits: a(1), b(2) and c(10-14). The alpha and beta chains form an alternating ring which encloses part of the gamma chain. F(1) is attached to F(0) by a central stalk formed by the gamma and epsilon chains, while a peripheral stalk is formed by the delta and b chains.

It is found in the cell inner membrane. In terms of biological role, f(1)F(0) ATP synthase produces ATP from ADP in the presence of a proton or sodium gradient. F-type ATPases consist of two structural domains, F(1) containing the extramembraneous catalytic core and F(0) containing the membrane proton channel, linked together by a central stalk and a peripheral stalk. During catalysis, ATP synthesis in the catalytic domain of F(1) is coupled via a rotary mechanism of the central stalk subunits to proton translocation. Its function is as follows. Key component of the F(0) channel; it plays a direct role in translocation across the membrane. A homomeric c-ring of between 10-14 subunits forms the central stalk rotor element with the F(1) delta and epsilon subunits. The chain is ATP synthase subunit c from Shewanella amazonensis (strain ATCC BAA-1098 / SB2B).